Here is a 366-residue protein sequence, read N- to C-terminus: Ribosomal RNA large subunit methyltransferase M (366 aa).

S-adenosyl-L-methionine is bound by residues Ser188, 221 to 224 (CPGG), Asp240, Asp260, and Asp277. Lys306 acts as the Proton acceptor in catalysis.

Belongs to the class I-like SAM-binding methyltransferase superfamily. RNA methyltransferase RlmE family. RlmM subfamily. In terms of assembly, monomer.

Its subcellular location is the cytoplasm. The catalysed reaction is cytidine(2498) in 23S rRNA + S-adenosyl-L-methionine = 2'-O-methylcytidine(2498) in 23S rRNA + S-adenosyl-L-homocysteine + H(+). In terms of biological role, catalyzes the 2'-O-methylation at nucleotide C2498 in 23S rRNA. The polypeptide is Ribosomal RNA large subunit methyltransferase M (Photorhabdus laumondii subsp. laumondii (strain DSM 15139 / CIP 105565 / TT01) (Photorhabdus luminescens subsp. laumondii)).